Reading from the N-terminus, the 137-residue chain is Large-conductance mechanosensitive channel (137 aa).

2 helical membrane passes run 9 to 29 (AFAVKGNVVDMAVGIIIGAAF) and 79 to 99 (IQTILDFVIVAFAIFMGVKAI).

This sequence belongs to the MscL family. In terms of assembly, homopentamer.

The protein localises to the cell inner membrane. Its function is as follows. Channel that opens in response to stretch forces in the membrane lipid bilayer. May participate in the regulation of osmotic pressure changes within the cell. The chain is Large-conductance mechanosensitive channel from Pseudomonas paraeruginosa (strain DSM 24068 / PA7) (Pseudomonas aeruginosa (strain PA7)).